Consider the following 461-residue polypeptide: tRNA modification GTPase MnmE (461 aa).

Positions 27, 89, and 128 each coordinate (6S)-5-formyl-5,6,7,8-tetrahydrofolate. The 159-residue stretch at 224-382 folds into the TrmE-type G domain; it reads GLATAIVGRP…LENAIEKLFF (159 aa). Asparagine 234 is a binding site for K(+). GTP contacts are provided by residues 234–239, 253–259, and 278–281; these read NVGKSS, TDIAGTT, and DTAG. Serine 238 contributes to the Mg(2+) binding site. Residues threonine 253, isoleucine 255, and threonine 258 each contribute to the K(+) site. Threonine 259 is a binding site for Mg(2+). Lysine 461 serves as a coordination point for (6S)-5-formyl-5,6,7,8-tetrahydrofolate.

Belongs to the TRAFAC class TrmE-Era-EngA-EngB-Septin-like GTPase superfamily. TrmE GTPase family. As to quaternary structure, homodimer. Heterotetramer of two MnmE and two MnmG subunits. K(+) serves as cofactor.

It localises to the cytoplasm. Functionally, exhibits a very high intrinsic GTPase hydrolysis rate. Involved in the addition of a carboxymethylaminomethyl (cmnm) group at the wobble position (U34) of certain tRNAs, forming tRNA-cmnm(5)s(2)U34. This Lactobacillus gasseri (strain ATCC 33323 / DSM 20243 / BCRC 14619 / CIP 102991 / JCM 1131 / KCTC 3163 / NCIMB 11718 / NCTC 13722 / AM63) protein is tRNA modification GTPase MnmE.